Consider the following 523-residue polypeptide: Glycerate kinase (523 aa).

Ser60 carries the phosphoserine modification. Lys200 bears the N6-acetyllysine mark.

It belongs to the glycerate kinase type-2 family.

Its subcellular location is the cytoplasm. The catalysed reaction is (R)-glycerate + ATP = (2R)-3-phosphoglycerate + ADP + H(+). This Rattus norvegicus (Rat) protein is Glycerate kinase (Glyctk).